A 586-amino-acid polypeptide reads, in one-letter code: DNA-binding protein RFX8 (586 aa).

The segment at residues 22–97 (VIQWLVDNFC…YHYDGICIKK (76 aa)) is a DNA-binding region (RFX-type winged-helix).

Belongs to the RFX family.

The protein localises to the nucleus. Functionally, may be a transcription factor. In Homo sapiens (Human), this protein is DNA-binding protein RFX8 (RFX8).